The primary structure comprises 88 residues: Sec-independent protein translocase protein TatA (88 aa).

A helical transmembrane segment spans residues 1–21; that stretch reads MNLGPTEILLILVIVVLLFGA. Basic and acidic residues predominate over residues 46 to 56; that stretch reads SNDDQRYEEQQ. The tract at residues 46–88 is disordered; sequence SNDDQRYEEQQQQRQIAAQAQQQVVNPVEIPQPQPTDIQRPQQ. Residues 57–68 are compositionally biased toward low complexity; it reads QQRQIAAQAQQQ.

The protein belongs to the TatA/E family. The Tat system comprises two distinct complexes: a TatABC complex, containing multiple copies of TatA, TatB and TatC subunits, and a separate TatA complex, containing only TatA subunits. Substrates initially bind to the TatABC complex, which probably triggers association of the separate TatA complex to form the active translocon.

The protein resides in the cell membrane. Its function is as follows. Part of the twin-arginine translocation (Tat) system that transports large folded proteins containing a characteristic twin-arginine motif in their signal peptide across membranes. TatA could form the protein-conducting channel of the Tat system. The polypeptide is Sec-independent protein translocase protein TatA (Corynebacterium diphtheriae (strain ATCC 700971 / NCTC 13129 / Biotype gravis)).